A 268-amino-acid polypeptide reads, in one-letter code: NADPH-dependent 7-cyano-7-deazaguanine reductase (268 aa).

79 to 81 lines the substrate pocket; the sequence is VES. 81 to 82 contributes to the NADPH binding site; that stretch reads SK. The Thioimide intermediate role is filled by Cys-176. The Proton donor role is filled by Asp-183. Position 215–216 (215–216) interacts with substrate; it reads HE. 244–245 contacts NADPH; sequence RG.

It belongs to the GTP cyclohydrolase I family. QueF type 2 subfamily. Homodimer.

It localises to the cytoplasm. It carries out the reaction 7-aminomethyl-7-carbaguanine + 2 NADP(+) = 7-cyano-7-deazaguanine + 2 NADPH + 3 H(+). It functions in the pathway tRNA modification; tRNA-queuosine biosynthesis. Catalyzes the NADPH-dependent reduction of 7-cyano-7-deazaguanine (preQ0) to 7-aminomethyl-7-deazaguanine (preQ1). The polypeptide is NADPH-dependent 7-cyano-7-deazaguanine reductase (Saccharophagus degradans (strain 2-40 / ATCC 43961 / DSM 17024)).